A 425-amino-acid polypeptide reads, in one-letter code: UDP-N-acetylglucosamine 1-carboxyvinyltransferase (425 aa).

22-23 (KN) provides a ligand contact to phosphoenolpyruvate. Arg91 contributes to the UDP-N-acetyl-alpha-D-glucosamine binding site. Catalysis depends on Cys115, which acts as the Proton donor. At Cys115 the chain carries 2-(S-cysteinyl)pyruvic acid O-phosphothioketal. Residues 120–124 (RPVDL), Asp309, and Ile331 each bind UDP-N-acetyl-alpha-D-glucosamine.

The protein belongs to the EPSP synthase family. MurA subfamily.

It localises to the cytoplasm. The enzyme catalyses phosphoenolpyruvate + UDP-N-acetyl-alpha-D-glucosamine = UDP-N-acetyl-3-O-(1-carboxyvinyl)-alpha-D-glucosamine + phosphate. It participates in cell wall biogenesis; peptidoglycan biosynthesis. In terms of biological role, cell wall formation. Adds enolpyruvyl to UDP-N-acetylglucosamine. The chain is UDP-N-acetylglucosamine 1-carboxyvinyltransferase from Akkermansia muciniphila (strain ATCC BAA-835 / DSM 22959 / JCM 33894 / BCRC 81048 / CCUG 64013 / CIP 107961 / Muc).